The chain runs to 203 residues: CASP-like protein 2U6 (203 aa).

Residues 1 to 31 (MSEHRIPVAADKKISPPISAGEQKGCKGLKR) lie on the Cytoplasmic side of the membrane. A helical membrane pass occupies residues 32–52 (TDLMLRFAAFVCCTVTMVVLI). At 53-84 (TDKQTSAIQVPGFNNLTITKTVSFDLAKAFVY) the chain is on the extracellular side. A glycan (N-linked (GlcNAc...) asparagine) is linked at Asn67. Residues 85–105 (LVSAAGIGAGYTLLVLVLSII) traverse the membrane as a helical segment. Residues 106-111 (SAERSK) lie on the Cytoplasmic side of the membrane. A helical transmembrane segment spans residues 112 to 132 (AIAWFIFVFDQLITYVLLAAA). Topologically, residues 133–164 (AASTEVAYMGAHAPPEASWLKVCSLFGRFCHQ) are extracellular. A helical transmembrane segment spans residues 165–185 (LGASLVTSLISTVLFAFSAAI). The Cytoplasmic segment spans residues 186 to 203 (SAYYLFSNTNVRPAYSKG).

It belongs to the Casparian strip membrane proteins (CASP) family. As to quaternary structure, homodimer and heterodimers.

It is found in the cell membrane. The polypeptide is CASP-like protein 2U6 (Selaginella moellendorffii (Spikemoss)).